Consider the following 144-residue polypeptide: Maximins 3/H2 (144 aa).

Positions 1 to 18 are cleaved as a signal peptide; sequence MNFKYIVAVSFLIASAYA. 2 consecutive propeptides follow at residues 19-43 and 74-123; these read RSVQNDEQSLSQRDVLEEESLREIR and TAEE…KEKR. I143 is modified (isoleucine amide).

Belongs to the bombinin family. In terms of tissue distribution, expressed by the skin glands.

Its subcellular location is the secreted. Its function is as follows. Maximin-3 shows antibacterial activity against both Gram-positive and Gram-negative bacteria. It also shows antimicrobial activity against the fungus C.albicans, but not against A.flavus nor P.uticale. It has little hemolytic activity. It possess a significant cytotoxicity against tumor cell lines. It possess a significant anti-HIV activity. It shows high spermicidal activity. Maximin-H2 shows antibacterial activity against both Gram-positive and Gram-negative bacteria. It also shows antimicrobial activity against the fungus C.albicans. Shows strong hemolytic activity. The protein is Maximins 3/H2 of Bombina maxima (Giant fire-bellied toad).